The chain runs to 389 residues: 23S rRNA (uracil(747)-C(5))-methyltransferase RlmC (389 aa).

[4Fe-4S] cluster contacts are provided by cysteine 12, cysteine 20, cysteine 23, and cysteine 99. Residues glutamine 224, phenylalanine 253, glutamate 274, and asparagine 321 each contribute to the S-adenosyl-L-methionine site. The active-site Nucleophile is the cysteine 348.

Belongs to the class I-like SAM-binding methyltransferase superfamily. RNA M5U methyltransferase family. RlmC subfamily.

The catalysed reaction is uridine(747) in 23S rRNA + S-adenosyl-L-methionine = 5-methyluridine(747) in 23S rRNA + S-adenosyl-L-homocysteine + H(+). Catalyzes the formation of 5-methyl-uridine at position 747 (m5U747) in 23S rRNA. This chain is 23S rRNA (uracil(747)-C(5))-methyltransferase RlmC, found in Shewanella sp. (strain W3-18-1).